The chain runs to 534 residues: Probable alpha-galactosidase A (534 aa).

The first 25 residues, 1-25, serve as a signal peptide directing secretion; it reads MRLITRWIPLANALASTMPVQVVAS. Cysteine 47 and cysteine 79 are disulfide-bonded. 4 N-linked (GlcNAc...) asparagine glycosylation sites follow: asparagine 50, asparagine 88, asparagine 94, and asparagine 124. An intrachain disulfide couples cysteine 127 to cysteine 157. Residue aspartate 155 is the Nucleophile of the active site. Asparagine 204 is a glycosylation site (N-linked (GlcNAc...) asparagine). The active-site Proton donor is aspartate 213. The region spanning 413–534 is the Ricin B-type lectin domain; it reads CSQVIPTGLI…GLPAGVHVAL (122 aa). Cysteine 430 and cysteine 443 are joined by a disulfide. A glycan (N-linked (GlcNAc...) asparagine) is linked at asparagine 444. Cysteine 468 and cysteine 481 form a disulfide bridge.

The protein belongs to the glycosyl hydrolase 27 family.

It is found in the secreted. The enzyme catalyses Hydrolysis of terminal, non-reducing alpha-D-galactose residues in alpha-D-galactosides, including galactose oligosaccharides, galactomannans and galactolipids.. Hydrolyzes a variety of simple alpha-D-galactoside as well as more complex molecules such as oligosaccharides and polysaccharides. In Aspergillus oryzae (strain ATCC 42149 / RIB 40) (Yellow koji mold), this protein is Probable alpha-galactosidase A (aglA).